We begin with the raw amino-acid sequence, 152 residues long: Small ribosomal subunit protein uS15 (152 aa).

A compositionally biased stretch (basic residues) spans 1 to 16; that stretch reads MARIHARRRGKSGSKR. Residues 1–21 form a disordered region; it reads MARIHARRRGKSGSKRIYRDS.

This sequence belongs to the universal ribosomal protein uS15 family. In terms of assembly, part of the 30S ribosomal subunit.

This chain is Small ribosomal subunit protein uS15, found in Archaeoglobus fulgidus (strain ATCC 49558 / DSM 4304 / JCM 9628 / NBRC 100126 / VC-16).